The primary structure comprises 234 residues: Phosphoribosylaminoimidazole-succinocarboxamide synthase (234 aa).

It belongs to the SAICAR synthetase family.

It carries out the reaction 5-amino-1-(5-phospho-D-ribosyl)imidazole-4-carboxylate + L-aspartate + ATP = (2S)-2-[5-amino-1-(5-phospho-beta-D-ribosyl)imidazole-4-carboxamido]succinate + ADP + phosphate + 2 H(+). It participates in purine metabolism; IMP biosynthesis via de novo pathway; 5-amino-1-(5-phospho-D-ribosyl)imidazole-4-carboxamide from 5-amino-1-(5-phospho-D-ribosyl)imidazole-4-carboxylate: step 1/2. The chain is Phosphoribosylaminoimidazole-succinocarboxamide synthase from Sulfurisphaera tokodaii (strain DSM 16993 / JCM 10545 / NBRC 100140 / 7) (Sulfolobus tokodaii).